The sequence spans 241 residues: Meiotically up-regulated gene 130 protein (241 aa).

Its subcellular location is the mitochondrion. Its function is as follows. Has a role in meiosis. The protein is Meiotically up-regulated gene 130 protein (mug130) of Schizosaccharomyces pombe (strain 972 / ATCC 24843) (Fission yeast).